The sequence spans 569 residues: MSLLVVGLSHRSAPVSVLERATLTADAQVKLLQDTVAAEPATEAAVLATCNRIELYADVDKFHAGVAELSTLLAQHSGVGLEELTPYLYVHYEDRAVHHLFSVACGLDSMVVGEGQILGQIKDALATAQELHTAGRLLNDLFQQALRTGKRAHSETGIDRAGQSLVTFGLEQLSAGTAVEAWAKGKRALVIGAGSMSSLAAATLARAGVAEVVIANRTPDRAERLAQILTEGDDTDVLARAVPMDAVPAELTRADVAVSCTGATGLVLTAEAVAAAVEGRTGTPVAVREETPASAAGGLAPAGTDEGCPLDLSAVQGATGFSVMGEAAVAGMDAATLEQHAAWVDRGTVDRRDSRRTPEVEAELITALAATVAAGGRLPERRRPEPVVEAPRPAPALALLDLAMPRDIDAAVHRLLGVRLVDIESLAEASADAPMAADVDLVRRIVADEVAAFGAAQRAAHITPTVVALRTMAADVVANEIARLDGRLPGLDEKQRGEITQTVRRVVDKLLHAPTVRVKQLAAEPGGAGYADALRTLFDLDPETVAAVSRADDRDTSDSTENAKNRGRE.

Substrate is bound by residues threonine 49–arginine 52, serine 109, glutamate 114–glutamine 116, and glutamine 120. Cysteine 50 functions as the Nucleophile in the catalytic mechanism. Glycine 192 to serine 197 contacts NADP(+). Positions proline 284–leucine 397 are insert. Residues alanine 546–glutamate 569 form a disordered region. The segment covering arginine 550–glutamate 569 has biased composition (basic and acidic residues).

This sequence belongs to the glutamyl-tRNA reductase family. In terms of assembly, homodimer.

The catalysed reaction is (S)-4-amino-5-oxopentanoate + tRNA(Glu) + NADP(+) = L-glutamyl-tRNA(Glu) + NADPH + H(+). It functions in the pathway porphyrin-containing compound metabolism; protoporphyrin-IX biosynthesis; 5-aminolevulinate from L-glutamyl-tRNA(Glu): step 1/2. Functionally, catalyzes the NADPH-dependent reduction of glutamyl-tRNA(Glu) to glutamate 1-semialdehyde (GSA). The polypeptide is Glutamyl-tRNA reductase (Streptomyces avermitilis (strain ATCC 31267 / DSM 46492 / JCM 5070 / NBRC 14893 / NCIMB 12804 / NRRL 8165 / MA-4680)).